Consider the following 991-residue polypeptide: MPGVARPPLPLLSLPLLLLLLLLPRAGRPLDLADYTYDLGEEDAPELLNYKDPCKAAAFLGDIALDEEDLRAFQVQQAAVLRQQTARRPSIKAAGNSSALGGQGTSGQPQRESRGRWRGRPRSRRAATSRPERVWPDGVIPFVIGGNFTGSQRAVFRQAMRHWEKHTCVTFLERTDEDSYIVFTYRPCGCCSYVGRRGGGPQAISIGKNCDKFGIVVHELGHVIGFWHEHTRPDRDRHVSIVRENIQPGQEYNFLKMEVQEVESLGETYDFDSIMHYARNTFSRGIFLDTIVPKYEVNGVKPSIGQRTRLSKGDIAQARKLYKCPACGETLQDSTGNFSSPEYPNGYSAHMHCVWRISVTPGEKIILNFTSMDLYRSRLCWYDYVEVRDGFWRKAPLRGRFCGGKLPEPIVSTDSRLWVEFRSSSNWVGKGFFAVYEAICGGDVKKDNGHIQSPNYPDDYRPSKVCIWRIQVSEGFHVGLTFQSFEIERHDSCAYDYLEVRDGHSESSNLIGRYCGYEKPDDIKSTSSRLWLKFVSDGSINKAGFAVNFFKEVDECSRPNRGGCEQRCLNTLGSYKCSCDPGYELAPDKRRCEAACGGFLTKLNGSITSPGWPKEYPPNKNCIWQLVAPTQYRISLQFDFFETEGNDVCKYDFVEVRSGLTADSKLHGKFCGSEKPEVITSQYNNMRVEFKSDNTVSKKGFKAHFFSDKDECSKDNGGCQQDCVNTFGSYECQCRSGFVLHDNKHDCKEAGCEHKVTSTSGTITSPNWPDKYPSKKECTWAISSTPGHRVKLTFVEMDIESQPECAYDHLEVFDGRDAKAPVLGRFCGSKKPEPVLATGNRMFLRFYSDNSVQRKGFQASHSTECGGQVRADVKTKDLYSHAQFGDNNYPGGVDCEWVIVAEEGYGVELVFQTFEVEEETDCGYDYIELFDGYDSTAPRLGRYCGSGPPEEVYSAGDSVLVKFHSDDTISKKGFHLRYTSTKFQDTLHSRK.

An N-terminal signal peptide occupies residues 1–25; sequence MPGVARPPLPLLSLPLLLLLLLLPR. Residues 26 to 125 constitute a propeptide that is removed on maturation; sequence AGRPLDLADY…RWRGRPRSRR (100 aa). Residues 86–131 form a disordered region; that stretch reads ARRPSIKAAGNSSALGGQGTSGQPQRESRGRWRGRPRSRRAATSRP. A compositionally biased stretch (polar residues) spans 95 to 110; the sequence is GNSSALGGQGTSGQPQ. A glycan (N-linked (GlcNAc...) asparagine) is linked at N96. A compositionally biased stretch (basic residues) spans 116–127; the sequence is RWRGRPRSRRAA. One can recognise a Peptidase M12A domain in the interval 126-325; sequence AATSRPERVW…AQARKLYKCP (200 aa). N-linked (GlcNAc...) asparagine glycosylation occurs at N147. Intrachain disulfides connect C168–C324, C188–C210, C190–C191, and C327–C353. A Zn(2+)-binding site is contributed by H218. E219 is a catalytic residue. Zn(2+) is bound by residues H222 and H228. CUB domains are found at residues 327–439 and 440–551; these read CGET…YEAI and CGGD…NFFK. N-linked (GlcNAc...) asparagine glycosylation is found at N337 and N368. Cystine bridges form between C380/C402, C440/C466, C493/C515, C556/C568, C564/C577, C579/C592, C596/C622, C649/C671, C712/C723, C719/C732, C734/C747, C752/C778, C805/C827, C865/C895, and C922/C944. The EGF-like 1; calcium-binding domain maps to 552–593; it reads EVDECSRPNRGGCEQRCLNTLGSYKCSCDPGYELAPDKRRCE. The 112-residue stretch at 596–707 folds into the CUB 3 domain; the sequence is CGGFLTKLNG…KKGFKAHFFS (112 aa). The N-linked (GlcNAc...) asparagine glycan is linked to N604. The EGF-like 2; calcium-binding domain occupies 708 to 748; sequence DKDECSKDNGGCQQDCVNTFGSYECQCRSGFVLHDNKHDCK. CUB domains follow at residues 752-864 and 865-981; these read CEHK…HSTE and CGGQ…YTST. 2 positions are modified to omega-N-methylarginine: R939 and R942.

Interacts with POSTN, the interaction promotes deposition on the extracellular matrix. It depends on Zn(2+) as a cofactor. As to expression, at high levels in embryonic maternal deciduum and floor plate region of the neural tube. Less in developing membranous and endochondral bone, submucosa of intestine, dermis of skin and the mesenchyme of spleen and lung.

It localises to the golgi apparatus. Its subcellular location is the trans-Golgi network. The protein resides in the secreted. It is found in the extracellular space. The protein localises to the extracellular matrix. The catalysed reaction is Cleavage of the C-terminal propeptide at Ala-|-Asp in type I and II procollagens and at Arg-|-Asp in type III.. Activity is increased by the procollagen C-endopeptidase enhancer protein. In terms of biological role, metalloprotease that plays key roles in regulating the formation of the extracellular matrix (ECM) via processing of various precursor proteins into mature functional enzymes or structural proteins. Thereby participates in several developmental and physiological processes such as cartilage and bone formation, muscle growth and homeostasis, wound healing and tissue repair. Roles in ECM formation include cleavage of the C-terminal propeptides from procollagens such as procollagen I, II and III or the proteolytic activation of the enzyme lysyl oxidase LOX, necessary to formation of covalent cross-links in collagen and elastic fibers. Additional substrates include matricellular thrombospondin-1/THBS1 whose cleavage leads to cell adhesion disruption and TGF-beta activation. The polypeptide is Bone morphogenetic protein 1 (Bmp1) (Mus musculus (Mouse)).